The primary structure comprises 238 residues: Phosphoribosylaminoimidazole-succinocarboxamide synthase (238 aa).

It belongs to the SAICAR synthetase family.

It catalyses the reaction 5-amino-1-(5-phospho-D-ribosyl)imidazole-4-carboxylate + L-aspartate + ATP = (2S)-2-[5-amino-1-(5-phospho-beta-D-ribosyl)imidazole-4-carboxamido]succinate + ADP + phosphate + 2 H(+). Its pathway is purine metabolism; IMP biosynthesis via de novo pathway; 5-amino-1-(5-phospho-D-ribosyl)imidazole-4-carboxamide from 5-amino-1-(5-phospho-D-ribosyl)imidazole-4-carboxylate: step 1/2. The protein is Phosphoribosylaminoimidazole-succinocarboxamide synthase of Methanococcoides burtonii (strain DSM 6242 / NBRC 107633 / OCM 468 / ACE-M).